The sequence spans 398 residues: Protein FAM53A (398 aa).

The tract at residues 85-253 (QWQPQSPRPG…TSTPALGGRR (169 aa)) is disordered. A compositionally biased stretch (polar residues) spans 103–115 (VDPSESTGSSTAP). Residues 123–132 (SLSEPEELVR) are compositionally biased toward basic and acidic residues. Phosphoserine is present on Ser-125. Composition is skewed to low complexity over residues 176–193 (STGP…ASGG) and 234–250 (TPLP…PALG). Residues 268-276 (KRSRRKRRR) carry the Nuclear localization signal motif. Phosphoserine occurs at positions 301 and 304. Residues 336-398 (PGCSQRGLRT…ELDLEQIENN (63 aa)) form a disordered region. Over residues 363 to 375 (GSRRSSGDPRDGD) the composition is skewed to basic and acidic residues.

Belongs to the FAM53 family.

It is found in the nucleus. Functionally, may play an important role in neural development; the dorsomedial roof of the third ventricle. This chain is Protein FAM53A, found in Homo sapiens (Human).